The sequence spans 290 residues: Phosphatidylglycerol--prolipoprotein diacylglyceryl transferase (290 aa).

A run of 7 helical transmembrane segments spans residues 21-41 (VSLH…MWLA), 60-80 (LLYA…VLFY), 96-116 (WDGG…MLWF), 124-144 (FFQV…AGRL), 199-219 (SQLY…NLFI), 226-246 (GSVS…VECF), and 259-279 (VISM…IMMI). Arg-143 serves as a coordination point for a 1,2-diacyl-sn-glycero-3-phospho-(1'-sn-glycerol).

Belongs to the Lgt family.

Its subcellular location is the cell inner membrane. It catalyses the reaction L-cysteinyl-[prolipoprotein] + a 1,2-diacyl-sn-glycero-3-phospho-(1'-sn-glycerol) = an S-1,2-diacyl-sn-glyceryl-L-cysteinyl-[prolipoprotein] + sn-glycerol 1-phosphate + H(+). It functions in the pathway protein modification; lipoprotein biosynthesis (diacylglyceryl transfer). Its function is as follows. Catalyzes the transfer of the diacylglyceryl group from phosphatidylglycerol to the sulfhydryl group of the N-terminal cysteine of a prolipoprotein, the first step in the formation of mature lipoproteins. The protein is Phosphatidylglycerol--prolipoprotein diacylglyceryl transferase of Yersinia enterocolitica serotype O:8 / biotype 1B (strain NCTC 13174 / 8081).